The following is a 512-amino-acid chain: MSEIREARLLKANSLINKGFEPYAETFKISHSTRFLNEKFGYLDNGQEFDLNVSLAGRVLAKRVMGKIAFFTITDQEGKIQLYLEKRIIDDYEINAKLLSFEDLKEIVDIGDWIGVFGTIKKTNKGELSIKVSKWEMLSKSLQPLPDKWHGLTDIEKRYRQRYLDLIVNPLSKTVFKTRAKCISLIRRWLDEKNFLEIETPILQSEAGGAEARPFITHHNTLDIPLYLRIATELHLKRMVVGGFEKVYELGRIFRNEGVSTKHNPEFTSVEIYQAFSNYIDMMNLTEDLIKNIVLSCCDSLVINYQDKVIDFSKPWKRISMKNVVKEYTGIDFDSFDGDLNKAKKFSEEINIEISPKINTLGRLLNEVFEQKVESQLIEPTFVTDYPIEISPLARRHPKNKEMVQRFELFIAGRELANAFSELIDPVDQRQRMQLQQSLRDAGDLEAHCIDEDFLQALEIGMPPTGGLGIGIDRLVMLLTNSSSIRDVIPFPLLKPELTSNKSEKSTSNEVK.

Positions 408 and 415 each coordinate Mg(2+).

This sequence belongs to the class-II aminoacyl-tRNA synthetase family. In terms of assembly, homodimer. The cofactor is Mg(2+).

It is found in the cytoplasm. The catalysed reaction is tRNA(Lys) + L-lysine + ATP = L-lysyl-tRNA(Lys) + AMP + diphosphate. This is Lysine--tRNA ligase from Prochlorococcus marinus (strain MIT 9515).